An 806-amino-acid chain; its full sequence is Glycerol-3-phosphate acyltransferase (806 aa).

The short motif at 305 to 310 is the HXXXXD motif element; it reads CHRSHM.

This sequence belongs to the GPAT/DAPAT family.

The protein resides in the cell inner membrane. It carries out the reaction sn-glycerol 3-phosphate + an acyl-CoA = a 1-acyl-sn-glycero-3-phosphate + CoA. It functions in the pathway phospholipid metabolism; CDP-diacylglycerol biosynthesis; CDP-diacylglycerol from sn-glycerol 3-phosphate: step 1/3. In Enterobacter sp. (strain 638), this protein is Glycerol-3-phosphate acyltransferase.